We begin with the raw amino-acid sequence, 1040 residues long: Activated CDC42 kinase 1 (1040 aa).

Residues 1 to 110 (MQPEEGTGWL…PSPTPGGLAG (110 aa)) form an SAM-like domain region. The disordered stretch occupies residues 86 to 109 (EAEFPSHHSQSTFRKPSPTPGGLA). Thr-113 is subject to Phosphothreonine. Residues 126 to 385 (LRLLEKLGDG…PTFVALRDFL (260 aa)) form the Protein kinase domain. ATP contacts are provided by residues 132–140 (LGDGSFGVV) and Lys-158. Asp-252 serves as the catalytic Proton acceptor. Position 284 is a phosphotyrosine; by SRC and autocatalysis (Tyr-284). The SH3 domain occupies 388–448 (AQPTDMRALQ…PRNVVTSVAG (61 aa)). The disordered stretch occupies residues 505–527 (RPTQHLGRMKKPTYDPVSEDPDP). Tyr-518 is subject to Phosphotyrosine. The interval 623–652 (DWDARPLPPPPAYDDVAQDEDDFEVCSINS) is required for interaction with SRC. A required for interaction with NEDD4 region spans residues 632–635 (PPAY). A disordered region spans residues 722–824 (TGQLTPSPTP…MPTTQSFASD (103 aa)). Residues 733-876 (GDDKPQVPPR…PYLERYQRFL (144 aa)) are EBD domain. Composition is skewed to pro residues over residues 738–749 (QVPPRVPIPPRP) and 772–783 (PSSPPRVPPREP). Over residues 802 to 812 (PLPHRLSSSPG) the composition is skewed to low complexity. The residue at position 827 (Tyr-827) is a Phosphotyrosine. At Arg-839 the chain carries Omega-N-methylarginine. 2 positions are modified to phosphotyrosine: Tyr-859 and Tyr-872. Ser-881 is modified (phosphoserine). The interval 881–957 (SPEEPAALPV…CPGDGQEAAR (77 aa)) is disordered. Over residues 888–903 (LPVPPLLPPPSTPAPA) the composition is skewed to pro residues. The segment covering 922-931 (NFSTNNSNPG) has biased composition (polar residues). Residues 958–998 (PADKVQMLQAMVHGVTTEECQAALRSHSWSIQRAAQYLKVE) enclose the UBA domain.

It belongs to the protein kinase superfamily. Tyr protein kinase family. As to quaternary structure, homodimer. Interacts with CDC42. Interacts with CSPG4 (activated). Interacts with MERTK (activated); stimulates autophosphorylation. May interact (phosphorylated) with HSP90AB1; maintains kinase activity. Interacts with NPHP1. Interacts with SNX9 (via SH3 domain). Interacts with SRC (via SH2 and SH3 domain). Interacts with EGFR, and this interaction is dependent on EGF stimulation and kinase activity of EGFR. Interacts (via kinase domain) with AKT1. Part of a collagen stimulated complex involved in cell migration composed of CDC42, CRK, TNK2 and BCAR1/p130cas. Interacts with BCAR1/p130cas via SH3 domains. Forms complexes with GRB2 and numerous receptor tyrosine kinases (RTK) including LTK, AXL or PDGFRL, in which GRB2 promotes RTK recruitment by TNK2. Interacts with NEDD4 (via WW3 domain). NEDD4L and EGF promote association with NEDD4. Mg(2+) is required as a cofactor. In terms of processing, autophosphorylation regulates kinase activity. Phosphorylation on Tyr-518 is required for interaction with SRC and is observed during association with clathrin-coated pits. Polyubiquitinated by NEDD4 and NEDD4L. Degradation can be induced by EGF and is lysosome-dependent.

Its subcellular location is the cell membrane. It localises to the nucleus. The protein resides in the endosome. It is found in the cell junction. The protein localises to the adherens junction. Its subcellular location is the cytoplasmic vesicle membrane. It localises to the cytoplasmic vesicle. The protein resides in the clathrin-coated vesicle. It is found in the membrane. The protein localises to the clathrin-coated pit. Its subcellular location is the cytoplasm. It localises to the cytosol. It carries out the reaction L-tyrosyl-[protein] + ATP = O-phospho-L-tyrosyl-[protein] + ADP + H(+). The catalysed reaction is L-seryl-[protein] + ATP = O-phospho-L-seryl-[protein] + ADP + H(+). It catalyses the reaction L-threonyl-[protein] + ATP = O-phospho-L-threonyl-[protein] + ADP + H(+). Non-receptor tyrosine-protein and serine/threonine-protein kinase that is implicated in cell spreading and migration, cell survival, cell growth and proliferation. Transduces extracellular signals to cytosolic and nuclear effectors. Phosphorylates AKT1, AR, MCF2, WASL and WWOX. Implicated in trafficking and clathrin-mediated endocytosis through binding to epidermal growth factor receptor (EGFR) and clathrin. Binds to both poly- and mono-ubiquitin and regulates ligand-induced degradation of EGFR, thereby contributing to the accumulation of EGFR at the limiting membrane of early endosomes. Downstream effector of CDC42 which mediates CDC42-dependent cell migration via phosphorylation of BCAR1. May be involved both in adult synaptic function and plasticity and in brain development. Activates AKT1 by phosphorylating it on 'Tyr-176'. Phosphorylates AR on 'Tyr-267' and 'Tyr-363', thereby promoting its recruitment to androgen-responsive enhancers (AREs). Phosphorylates WWOX on 'Tyr-287'. Phosphorylates MCF2, thereby enhancing its activity as a guanine nucleotide exchange factor (GEF) toward Rho family proteins. Contributes to the control of AXL receptor levels. Confers metastatic properties on cancer cells and promotes tumor growth by negatively regulating tumor suppressor such as WWOX and positively regulating pro-survival factors such as AKT1 and AR. The chain is Activated CDC42 kinase 1 from Rattus norvegicus (Rat).